A 616-amino-acid chain; its full sequence is Chaperone protein HscA homolog (616 aa).

It belongs to the heat shock protein 70 family.

Its function is as follows. Chaperone involved in the maturation of iron-sulfur cluster-containing proteins. Has a low intrinsic ATPase activity which is markedly stimulated by HscB. This is Chaperone protein HscA homolog from Histophilus somni (strain 129Pt) (Haemophilus somnus).